The sequence spans 234 residues: Sugar fermentation stimulation protein A (234 aa).

A DNA-binding region (H-T-H motif) is located at residues 201–220 (LLSEAQNKGVEVLAYKAELS).

The protein belongs to the SfsA family.

Functionally, binds to DNA non-specifically. Could be a regulatory factor involved in maltose metabolism. The polypeptide is Sugar fermentation stimulation protein A (Salmonella choleraesuis (strain SC-B67)).